The following is a 504-amino-acid chain: UDP-N-acetylmuramoylalanine--D-glutamate ligase (504 aa).

129-135 (GTNGKTT) serves as a coordination point for ATP.

Belongs to the MurCDEF family.

It localises to the cytoplasm. The enzyme catalyses UDP-N-acetyl-alpha-D-muramoyl-L-alanine + D-glutamate + ATP = UDP-N-acetyl-alpha-D-muramoyl-L-alanyl-D-glutamate + ADP + phosphate + H(+). The protein operates within cell wall biogenesis; peptidoglycan biosynthesis. In terms of biological role, cell wall formation. Catalyzes the addition of glutamate to the nucleotide precursor UDP-N-acetylmuramoyl-L-alanine (UMA). The sequence is that of UDP-N-acetylmuramoylalanine--D-glutamate ligase from Cupriavidus metallidurans (strain ATCC 43123 / DSM 2839 / NBRC 102507 / CH34) (Ralstonia metallidurans).